The sequence spans 540 residues: Hexose transporter HXT14 (540 aa).

Residues 1 to 56 (MTAQIPYQHSSGYISHFHNNELDAGRGRDYNVTIKYLDDKEENIEGQAAKISHNAS) are Cytoplasmic-facing. The chain crosses the membrane as a helical span at residues 57 to 76 (LHIPVLLCLVISLGGFIFGW). The Extracellular segment spans residues 77-119 (DIGTIGGMTNMVSFQEKFGTTNIIHDDETIFVSTKKLTDLQIG). Residues 120-140 (LIISIFNISCGVGALTLSKIG) form a helical membrane-spanning segment. The Cytoplasmic segment spans residues 141 to 146 (DWIGRK). A helical membrane pass occupies residues 147-167 (GGIWFALVVYCIGITIQILSY). The Extracellular portion of the chain corresponds to 168–177 (GRWYFLTLGR). Residues 178–198 (AVTGIGVGVTTVLVPMFLSEN) traverse the membrane as a helical segment. At 199-204 (SPLKIR) the chain is on the cytoplasmic side. A helical membrane pass occupies residues 205 to 225 (GSMVSTYQLIVTFGILMGNIL). Over 226-243 (NFICERCYKDPTQNIAWQ) the chain is Extracellular. The chain crosses the membrane as a helical span at residues 244-264 (LPLFLGYIWAIIIGMSLVYVP). The Cytoplasmic portion of the chain corresponds to 265 to 357 (ESPQYLAKIK…IMAFQQLSGI (93 aa)). Residues 358–374 (NYFFYYGTSVFKGVGIK) form a helical membrane-spanning segment. The Extracellular segment spans residues 375 to 380 (DPYITS). Residues 381–398 (IILSSVNFLSTILGIYYV) traverse the membrane as a helical segment. Topologically, residues 399 to 405 (EKWGHKT) are cytoplasmic. Residues 406 to 426 (CLLYGSTNLLFYMMTYATVGT) traverse the membrane as a helical segment. Residues 427–440 (FGRETDFSNIVLII) are Extracellular-facing. Residues 441 to 461 (VTCCFIFWFAITLGPVTFVLV) form a helical membrane-spanning segment. Residues 462–478 (SELFPLRTRAISMAICT) are Cytoplasmic-facing. Residues 479 to 499 (FINWMFNFLISLLTPMIVSKI) traverse the membrane as a helical segment. Position 500 (Asp500) is a topological domain, extracellular. Residues 501 to 521 (FKLGYIFAACLLALIIFSWIL) form a helical membrane-spanning segment. The Cytoplasmic portion of the chain corresponds to 522 to 540 (VPETRKKNEQEINKIFEPE).

It belongs to the major facilitator superfamily. Sugar transporter (TC 2.A.1.1) family.

It localises to the membrane. Probable glucose transporter. This Saccharomyces cerevisiae (strain ATCC 204508 / S288c) (Baker's yeast) protein is Hexose transporter HXT14 (HXT14).